The sequence spans 47 residues: Zinc-finger protein TK0143 (47 aa).

The segment at Phe18–His41 adopts a C2H2-type zinc-finger fold. Zn(2+) contacts are provided by Cys20, Cys23, His36, and His41.

As to quaternary structure, crystallized in association with 70S ribosomes. Zn(2+) is required as a cofactor.

The polypeptide is Zinc-finger protein TK0143 (Thermococcus kodakarensis (strain ATCC BAA-918 / JCM 12380 / KOD1) (Pyrococcus kodakaraensis (strain KOD1))).